The chain runs to 128 residues: uncharacterized protein (128 aa).

A compositionally biased stretch (basic and acidic residues) spans 1–11; that stretch reads MDNKKKEENPS. Positions 1–40 are disordered; sequence MDNKKKEENPSKSDTSISLPPSSTGEALQNYTESEWNASD. A compositionally biased stretch (polar residues) spans 12-37; that stretch reads KSDTSISLPPSSTGEALQNYTESEWN.

This is an uncharacterized protein from Caenorhabditis elegans.